The primary structure comprises 384 residues: Transcription factor 7 (384 aa).

Positions 1-16 (MPQLDSGGGGAGGGDD) are enriched in gly residues. A CTNNB1-binding region spans residues 1-59 (MPQLDSGGGGAGGGDDLGAPDELLAFQDEGEEQDDKSRDSAAGPERDLAELKSSLVNES). Disordered stretches follow at residues 1–88 (MPQL…LGRE), 133–183 (PPSG…QKQV), and 337–384 (SARD…MTVL). A compositionally biased stretch (basic and acidic residues) spans 35-50 (DKSRDSAAGPERDLAE). Residues 62-78 (AAGGAGIPGVPGAGAGA) are compositionally biased toward gly residues. The segment at residues 269–337 (IKKPLNAFML…LHMQLYPGWS (69 aa)) is a DNA-binding region (HMG box). The short motif at 344–348 (KKKRR) is the Nuclear localization signal element. Basic and acidic residues predominate over residues 352–370 (KHQESTTGGKRNAFGTYPE). Residues 374–384 (APAPFLPMTVL) show a composition bias toward low complexity.

Belongs to the TCF/LEF family. As to quaternary structure, binds the armadillo repeat of CTNNB1 and forms a stable complex. Interacts with TLE5, TLE1, TLE2, TLE3 and TLE4. Interacts with MLLT11. Long isoform interacts (via N-terminus) with SOX13; inhibits WNT-mediated transcriptional activity. Interacts with DAZAP2. As to expression, predominantly expressed in T-cells. Also detected in proliferating intestinal epithelial cells and in the basal epithelial cells of mammary gland epithelium.

The protein localises to the nucleus. Its function is as follows. Transcriptional activator involved in T-cell lymphocyte differentiation. Necessary for the survival of CD4(+) CD8(+) immature thymocytes. Isoforms lacking the N-terminal CTNNB1 binding domain cannot fulfill this role. Binds to the T-lymphocyte-specific enhancer element (5'-WWCAAAG-3') found in the promoter of the CD3E gene. Represses expression of the T-cell receptor gamma gene in alpha-beta T-cell lineages. Required for the development of natural killer receptor-positive lymphoid tissue inducer T-cells. TLE1, TLE2, TLE3 and TLE4 repress transactivation mediated by TCF7 and CTNNB1. May also act as feedback transcriptional repressor of CTNNB1 and TCF7L2 target genes. This Homo sapiens (Human) protein is Transcription factor 7.